Consider the following 321-residue polypeptide: Ferredoxin--NADP reductase (321 aa).

The FAD site is built by aspartate 28, glutamine 36, tyrosine 41, alanine 81, phenylalanine 115, aspartate 274, and serine 315.

Belongs to the ferredoxin--NADP reductase type 2 family. Homodimer. It depends on FAD as a cofactor.

The catalysed reaction is 2 reduced [2Fe-2S]-[ferredoxin] + NADP(+) + H(+) = 2 oxidized [2Fe-2S]-[ferredoxin] + NADPH. The sequence is that of Ferredoxin--NADP reductase from Frankia alni (strain DSM 45986 / CECT 9034 / ACN14a).